The primary structure comprises 193 residues: Potassium-transporting ATPase KdpC subunit (193 aa).

Residues 7–27 traverse the membrane as a helical segment; it reads PALVLFALLSALTGLAYPLAV.

Belongs to the KdpC family. The system is composed of three essential subunits: KdpA, KdpB and KdpC.

Its subcellular location is the cell inner membrane. Part of the high-affinity ATP-driven potassium transport (or Kdp) system, which catalyzes the hydrolysis of ATP coupled with the electrogenic transport of potassium into the cytoplasm. This subunit acts as a catalytic chaperone that increases the ATP-binding affinity of the ATP-hydrolyzing subunit KdpB by the formation of a transient KdpB/KdpC/ATP ternary complex. The polypeptide is Potassium-transporting ATPase KdpC subunit (Variovorax paradoxus (strain S110)).